The chain runs to 517 residues: 2,3-bisphosphoglycerate-independent phosphoglycerate mutase (517 aa).

Positions 12 and 62 each coordinate Mn(2+). Serine 62 serves as the catalytic Phosphoserine intermediate. Residues histidine 123, arginine 153–aspartate 154, arginine 185, arginine 191, arginine 261–arginine 264, and lysine 336 each bind substrate. Mn(2+) contacts are provided by aspartate 403, histidine 407, aspartate 444, histidine 445, and histidine 463.

Belongs to the BPG-independent phosphoglycerate mutase family. Monomer. Mn(2+) serves as cofactor.

The enzyme catalyses (2R)-2-phosphoglycerate = (2R)-3-phosphoglycerate. It participates in carbohydrate degradation; glycolysis; pyruvate from D-glyceraldehyde 3-phosphate: step 3/5. In terms of biological role, catalyzes the interconversion of 2-phosphoglycerate and 3-phosphoglycerate. This chain is 2,3-bisphosphoglycerate-independent phosphoglycerate mutase, found in Methylobacillus flagellatus (strain ATCC 51484 / DSM 6875 / VKM B-1610 / KT).